Reading from the N-terminus, the 210-residue chain is Na(+)-translocating NADH-quinone reductase subunit D (210 aa).

A run of 6 helical transmembrane segments spans residues 14–34, 42–62, 72–92, 103–123, 131–151, and 178–198; these read PIIS…ALAV, LVMT…ISMI, IIVQ…VLQA, VFVG…AYAM, FMDG…VGFV, and NGLL…IWII.

This sequence belongs to the NqrDE/RnfAE family. In terms of assembly, composed of six subunits; NqrA, NqrB, NqrC, NqrD, NqrE and NqrF.

Its subcellular location is the cell inner membrane. It catalyses the reaction a ubiquinone + n Na(+)(in) + NADH + H(+) = a ubiquinol + n Na(+)(out) + NAD(+). Its function is as follows. NQR complex catalyzes the reduction of ubiquinone-1 to ubiquinol by two successive reactions, coupled with the transport of Na(+) ions from the cytoplasm to the periplasm. NqrA to NqrE are probably involved in the second step, the conversion of ubisemiquinone to ubiquinol. The sequence is that of Na(+)-translocating NADH-quinone reductase subunit D from Shewanella loihica (strain ATCC BAA-1088 / PV-4).